Consider the following 806-residue polypeptide: Phenylalanine--tRNA ligase beta subunit (806 aa).

The tRNA-binding domain maps to 44 to 158; it reads ADGLSKLVVG…EEAVPGDAIF (115 aa). Residues 411-486 form the B5 domain; the sequence is TEPVEVSTSL…RIYGYDKLPT (76 aa). Residues aspartate 464, aspartate 470, glutamate 473, and glutamate 474 each contribute to the Mg(2+) site. The region spanning 713–806 is the FDX-ACB domain; the sequence is TKFPAMTRDV…LTEQVGAEVR (94 aa).

It belongs to the phenylalanyl-tRNA synthetase beta subunit family. Type 1 subfamily. As to quaternary structure, tetramer of two alpha and two beta subunits. Mg(2+) serves as cofactor.

The protein localises to the cytoplasm. It catalyses the reaction tRNA(Phe) + L-phenylalanine + ATP = L-phenylalanyl-tRNA(Phe) + AMP + diphosphate + H(+). This chain is Phenylalanine--tRNA ligase beta subunit, found in Streptococcus pyogenes serotype M28 (strain MGAS6180).